The primary structure comprises 444 residues: UDP-N-acetylglucosamine 1-carboxyvinyltransferase (444 aa).

22–23 (KN) is a binding site for phosphoenolpyruvate. R94 is a UDP-N-acetyl-alpha-D-glucosamine binding site. The active-site Proton donor is D119. UDP-N-acetyl-alpha-D-glucosamine is bound by residues D309 and V331.

Belongs to the EPSP synthase family. MurA subfamily.

It localises to the cytoplasm. It carries out the reaction phosphoenolpyruvate + UDP-N-acetyl-alpha-D-glucosamine = UDP-N-acetyl-3-O-(1-carboxyvinyl)-alpha-D-glucosamine + phosphate. The protein operates within cell wall biogenesis; peptidoglycan biosynthesis. In terms of biological role, cell wall formation. Adds enolpyruvyl to UDP-N-acetylglucosamine. The polypeptide is UDP-N-acetylglucosamine 1-carboxyvinyltransferase (Chlamydia trachomatis serovar D (strain ATCC VR-885 / DSM 19411 / UW-3/Cx)).